A 1157-amino-acid polypeptide reads, in one-letter code: DNA-directed RNA polymerase subunit beta (1157 aa).

This sequence belongs to the RNA polymerase beta chain family. In terms of assembly, the RNAP catalytic core consists of 2 alpha, 1 beta, 1 beta' and 1 omega subunit. When a sigma factor is associated with the core the holoenzyme is formed, which can initiate transcription.

It catalyses the reaction RNA(n) + a ribonucleoside 5'-triphosphate = RNA(n+1) + diphosphate. Functionally, DNA-dependent RNA polymerase catalyzes the transcription of DNA into RNA using the four ribonucleoside triphosphates as substrates. The protein is DNA-directed RNA polymerase subunit beta of Tropheryma whipplei (strain Twist) (Whipple's bacillus).